Reading from the N-terminus, the 322-residue chain is Tyrosine recombinase XerC (322 aa).

Positions 14–104 (PDLREAAAAW…ALRSFARHLD (91 aa)) constitute a Core-binding (CB) domain. The 187-residue stretch at 125–311 (RLPRPLPVAA…DSARLLSAFD (187 aa)) folds into the Tyr recombinase domain. Residues Arg170, Lys195, His263, Arg266, and His289 contribute to the active site. Tyr298 (O-(3'-phospho-DNA)-tyrosine intermediate) is an active-site residue.

Belongs to the 'phage' integrase family. XerC subfamily. In terms of assembly, forms a cyclic heterotetrameric complex composed of two molecules of XerC and two molecules of XerD.

It localises to the cytoplasm. In terms of biological role, site-specific tyrosine recombinase, which acts by catalyzing the cutting and rejoining of the recombining DNA molecules. The XerC-XerD complex is essential to convert dimers of the bacterial chromosome into monomers to permit their segregation at cell division. It also contributes to the segregational stability of plasmids. This is Tyrosine recombinase XerC from Methylobacterium nodulans (strain LMG 21967 / CNCM I-2342 / ORS 2060).